The following is a 278-amino-acid chain: Ribosomal RNA small subunit methyltransferase A (278 aa).

S-adenosyl-L-methionine is bound by residues Asn-28, Leu-30, Gly-55, Glu-77, Asp-103, and Asn-122.

Belongs to the class I-like SAM-binding methyltransferase superfamily. rRNA adenine N(6)-methyltransferase family. RsmA subfamily.

The protein resides in the cytoplasm. The catalysed reaction is adenosine(1518)/adenosine(1519) in 16S rRNA + 4 S-adenosyl-L-methionine = N(6)-dimethyladenosine(1518)/N(6)-dimethyladenosine(1519) in 16S rRNA + 4 S-adenosyl-L-homocysteine + 4 H(+). In terms of biological role, specifically dimethylates two adjacent adenosines (A1518 and A1519) in the loop of a conserved hairpin near the 3'-end of 16S rRNA in the 30S particle. May play a critical role in biogenesis of 30S subunits. This is Ribosomal RNA small subunit methyltransferase A from Cereibacter sphaeroides (strain ATCC 17023 / DSM 158 / JCM 6121 / CCUG 31486 / LMG 2827 / NBRC 12203 / NCIMB 8253 / ATH 2.4.1.) (Rhodobacter sphaeroides).